The primary structure comprises 74 residues: Small ribosomal subunit protein uS15 (74 aa).

It belongs to the universal ribosomal protein uS15 family. Part of the 30S ribosomal subunit. Forms a bridge to the 50S subunit in the 70S ribosome, contacting the 23S rRNA.

Functionally, one of the primary rRNA binding proteins, it binds directly to 16S rRNA where it helps nucleate assembly of the platform of the 30S subunit by binding and bridging several RNA helices of the 16S rRNA. In terms of biological role, forms an intersubunit bridge (bridge B4) with the 23S rRNA of the 50S subunit in the ribosome. In Onion yellows phytoplasma (strain OY-M), this protein is Small ribosomal subunit protein uS15.